The primary structure comprises 286 residues: Ribosomal RNA small subunit methyltransferase H (286 aa).

Residues 30-32 (GGH), aspartate 49, phenylalanine 88, aspartate 97, and glutamine 104 each bind S-adenosyl-L-methionine. The tract at residues 260 to 286 (HPLQPSDEESFNNPASRSAKLRALEMR) is disordered.

Belongs to the methyltransferase superfamily. RsmH family.

The protein resides in the cytoplasm. It carries out the reaction cytidine(1402) in 16S rRNA + S-adenosyl-L-methionine = N(4)-methylcytidine(1402) in 16S rRNA + S-adenosyl-L-homocysteine + H(+). In terms of biological role, specifically methylates the N4 position of cytidine in position 1402 (C1402) of 16S rRNA. The protein is Ribosomal RNA small subunit methyltransferase H of Solibacter usitatus (strain Ellin6076).